The chain runs to 269 residues: MKIALGIEYNGQNYYGWQRQEKVRSVQEELEKALSHIANEKIEIFCAGRTDSGVSGTGQVVHFETNAVRPEKAWAFGTNAHLPDDIAVAWAKQVDDEFHARFSATARRYRYILYCNKLRSAILAGGITHCHLDLDAEKMHQAGQCLLGEQDFSSFRAAQCQSHTPWRNVHHLNVSRIGKYIIVDIQANAFVHHMVRNIVGSLIEVGAGNQPIEWMQWLLEQKNRQLAAPTAKPDGLYLVDVIYPQKFDIPKRPIGPLFLEDGLLNRTLK.

The active-site Nucleophile is the D51. Y109 provides a ligand contact to substrate.

It belongs to the tRNA pseudouridine synthase TruA family. Homodimer.

It catalyses the reaction uridine(38/39/40) in tRNA = pseudouridine(38/39/40) in tRNA. Its function is as follows. Formation of pseudouridine at positions 38, 39 and 40 in the anticodon stem and loop of transfer RNAs. This Haemophilus influenzae (strain 86-028NP) protein is tRNA pseudouridine synthase A.